The chain runs to 4007 residues: PKS-NRPS hybrid synthetase psoA (4007 aa).

Residues 8–444 (KEPIAIIGTG…GTNCHAIVES (437 aa)) enclose the Ketosynthase family 3 (KS3) domain. Active-site for beta-ketoacyl synthase activity residues include Cys182, His321, and His364. A malonyl-CoA:ACP transacylase (MAT) domain region spans residues 575–897 (VFTGQGAQWA…VLDRKADDIL (323 aa)). Residues 969-1105 (HPLLGSRTPD…GHIRITLAAE (137 aa)) form an N-terminal hotdog fold region. Residues 969–1147 (HPLLGSRTPD…LSYSGPFRAM (179 aa)) form a dehydratase (DH) domain region. The 308-residue stretch at 969–1276 (HPLLGSRTPD…MSSFLPASEK (308 aa)) folds into the PKS/mFAS DH domain. His1001 acts as the Proton acceptor; for dehydratase activity in catalysis. The tract at residues 1120 to 1276 (DLLPTSVDRF…MSSFLPASEK (157 aa)) is C-terminal hotdog fold. Asp1179 (proton donor; for dehydratase activity) is an active-site residue. Residues 2131–2305 (TYLLVGLTGH…PASVIDIGMV (175 aa)) form a ketoreductase (KR) domain region. The 78-residue stretch at 2418 to 2495 (EARKVMENAL…QICDEVVASL (78 aa)) folds into the Carrier 1 domain. Ser2455 bears the O-(pantetheine 4'-phosphoryl)serine mark. The segment at 2513 to 2550 (PAHKLRPWDKPSADTKRTDSIAPVPRSQIAANGPNGLP) is disordered. Positions 2518–2531 (RPWDKPSADTKRTD) are enriched in basic and acidic residues. Positions 2589 to 2885 (QPLSLGQSRL…LETIPLWFKV (297 aa)) are condensation (C) domain. The segment at 3076 to 3478 (TYVQLAERAN…LGDVARALVQ (403 aa)) is adenylation (A) domain. In terms of domain architecture, Carrier 2 spans 3576 to 3652 (TPTEARLRDV…LLAARLDGTS (77 aa)). Ser3612 carries the O-(pantetheine 4'-phosphoryl)serine modification. Residues 3696–3920 (LTGATGFLGG…INVETVSNNI (225 aa)) are reductase (R) domain.

In the C-terminal section; belongs to the NRP synthetase family.

It participates in secondary metabolite biosynthesis. PKS-NRPS hybrid synthetase; part of the gene cluster that mediates the biosynthesis of pseurotin A, a competitive inhibitor of chitin synthase and an inducer of nerve-cell proliferation. The PKS-NRPS hybrid synthetase psoA is responsible for the biosynthesis of azaspirene, one of the first intermediates having the 1-oxa-7-azaspiro[4,4]-non-2-ene-4,6-dione core of pseurotin, via condensation of one acetyl-CoA, 4 malonyl-CoA, and a L-phenylalanine molecule. The dual-functional monooxygenase/methyltransferase psoF seems to be involved in the addition of the C3 methyl group onto the pseurotin scaffold. Azaspirene is then converted to synerazol through 4 steps including oxidation of C17 by the cytochrome P450 monooxygenase psoD, O-methylation of the hydroxy group of C8 by the methyltransferase psoC, and the trans-to-cis isomerization of the C13 olefin by the glutathione S-transferase psoE. The fourth step of synerazol production is performed by the dual-functional monooxygenase/methyltransferase psoF which seems to catalyze the epoxidation of the intermediate deepoxy-synerazol. Synerazol can be attacked by a water molecule nonenzymatically at two different positions to yield two diol products, pseurotin A and pseurotin D. The chain is PKS-NRPS hybrid synthetase psoA from Aspergillus fumigatus (strain ATCC MYA-4609 / CBS 101355 / FGSC A1100 / Af293) (Neosartorya fumigata).